Here is a 369-residue protein sequence, read N- to C-terminus: Geranylgeranyl pyrophosphate synthase, chloroplastic (369 aa).

Residues K118, R121, and H150 each coordinate isopentenyl diphosphate. Residues D157 and D163 each contribute to the Mg(2+) site. R168 serves as a coordination point for dimethylallyl diphosphate. Residue R169 coordinates isopentenyl diphosphate. Dimethylallyl diphosphate is bound by residues K254, T255, Q292, K309, and K319.

The protein belongs to the FPP/GGPP synthase family. As to quaternary structure, monomer. Mg(2+) serves as cofactor.

The protein localises to the plastid. Its subcellular location is the chloroplast. It carries out the reaction isopentenyl diphosphate + dimethylallyl diphosphate = (2E)-geranyl diphosphate + diphosphate. It catalyses the reaction isopentenyl diphosphate + (2E)-geranyl diphosphate = (2E,6E)-farnesyl diphosphate + diphosphate. The catalysed reaction is isopentenyl diphosphate + (2E,6E)-farnesyl diphosphate = (2E,6E,10E)-geranylgeranyl diphosphate + diphosphate. The protein operates within isoprenoid biosynthesis; farnesyl diphosphate biosynthesis; farnesyl diphosphate from geranyl diphosphate and isopentenyl diphosphate: step 1/1. Its pathway is isoprenoid biosynthesis; geranyl diphosphate biosynthesis; geranyl diphosphate from dimethylallyl diphosphate and isopentenyl diphosphate: step 1/1. It functions in the pathway isoprenoid biosynthesis; geranylgeranyl diphosphate biosynthesis; geranylgeranyl diphosphate from farnesyl diphosphate and isopentenyl diphosphate: step 1/1. Functionally, catalyzes the trans-addition of the three molecules of IPP onto DMAPP to form geranylgeranyl pyrophosphate. The chain is Geranylgeranyl pyrophosphate synthase, chloroplastic from Capsicum annuum (Capsicum pepper).